The primary structure comprises 260 residues: Proteasome subunit alpha (260 aa).

Positions 237–248 (ASTDAPAAAADS) are enriched in low complexity. The segment at 237 to 260 (ASTDAPAAAADSADVEERPDSEAP) is disordered. Basic and acidic residues predominate over residues 251–260 (VEERPDSEAP).

Belongs to the peptidase T1A family. In terms of assembly, the 20S proteasome core is composed of 14 alpha and 14 beta subunits that assemble into four stacked heptameric rings, resulting in a barrel-shaped structure. The two inner rings, each composed of seven catalytic beta subunits, are sandwiched by two outer rings, each composed of seven alpha subunits. The catalytic chamber with the active sites is on the inside of the barrel. Has a gated structure, the ends of the cylinder being occluded by the N-termini of the alpha-subunits. Is capped by the proteasome-associated ATPase, ARC.

It is found in the cytoplasm. It participates in protein degradation; proteasomal Pup-dependent pathway. Its activity is regulated as follows. The formation of the proteasomal ATPase ARC-20S proteasome complex, likely via the docking of the C-termini of ARC into the intersubunit pockets in the alpha-rings, may trigger opening of the gate for substrate entry. Interconversion between the open-gate and close-gate conformations leads to a dynamic regulation of the 20S proteasome proteolysis activity. Its function is as follows. Component of the proteasome core, a large protease complex with broad specificity involved in protein degradation. In Salinispora tropica (strain ATCC BAA-916 / DSM 44818 / JCM 13857 / NBRC 105044 / CNB-440), this protein is Proteasome subunit alpha.